The chain runs to 402 residues: NADH-quinone oxidoreductase subunit D (402 aa).

It belongs to the complex I 49 kDa subunit family. As to quaternary structure, NDH-1 is composed of 14 different subunits. Subunits NuoB, C, D, E, F, and G constitute the peripheral sector of the complex.

It localises to the cell inner membrane. The enzyme catalyses a quinone + NADH + 5 H(+)(in) = a quinol + NAD(+) + 4 H(+)(out). NDH-1 shuttles electrons from NADH, via FMN and iron-sulfur (Fe-S) centers, to quinones in the respiratory chain. The immediate electron acceptor for the enzyme in this species is believed to be ubiquinone. Couples the redox reaction to proton translocation (for every two electrons transferred, four hydrogen ions are translocated across the cytoplasmic membrane), and thus conserves the redox energy in a proton gradient. The chain is NADH-quinone oxidoreductase subunit D from Maricaulis maris (strain MCS10) (Caulobacter maris).